A 477-amino-acid polypeptide reads, in one-letter code: Glutamate--tRNA ligase 2 (477 aa).

A 'HIGH' region motif is present at residues 12–22 (PSPTGRMHLGN). C109, C111, C136, and H138 together coordinate Zn(2+). The 'KMSKS' region motif lies at 253–257 (PLSKR). Residue K256 participates in ATP binding.

This sequence belongs to the class-I aminoacyl-tRNA synthetase family. Glutamate--tRNA ligase type 1 subfamily. In terms of assembly, monomer. Zn(2+) is required as a cofactor.

The protein localises to the cytoplasm. The catalysed reaction is tRNA(Glu) + L-glutamate + ATP = L-glutamyl-tRNA(Glu) + AMP + diphosphate. Functionally, catalyzes the attachment of glutamate to tRNA(Glu) in a two-step reaction: glutamate is first activated by ATP to form Glu-AMP and then transferred to the acceptor end of tRNA(Glu). The sequence is that of Glutamate--tRNA ligase 2 from Alkalilimnicola ehrlichii (strain ATCC BAA-1101 / DSM 17681 / MLHE-1).